The sequence spans 480 residues: tRNA-2-methylthio-N(6)-dimethylallyladenosine synthase (480 aa).

An MTTase N-terminal domain is found at 31–151 (RGLHVITWGC…LPEMVARAAR (121 aa)). 6 residues coordinate [4Fe-4S] cluster: Cys40, Cys76, Cys114, Cys192, Cys196, and Cys199. The Radical SAM core domain maps to 178 to 410 (SPGGITSFLT…QALLRTQQDA (233 aa)). Residues 413-475 (DGTVGHVVPV…TNSLSGTLVQ (63 aa)) form the TRAM domain.

The protein belongs to the methylthiotransferase family. MiaB subfamily. In terms of assembly, monomer. The cofactor is [4Fe-4S] cluster.

The protein resides in the cytoplasm. It carries out the reaction N(6)-dimethylallyladenosine(37) in tRNA + (sulfur carrier)-SH + AH2 + 2 S-adenosyl-L-methionine = 2-methylsulfanyl-N(6)-dimethylallyladenosine(37) in tRNA + (sulfur carrier)-H + 5'-deoxyadenosine + L-methionine + A + S-adenosyl-L-homocysteine + 2 H(+). Functionally, catalyzes the methylthiolation of N6-(dimethylallyl)adenosine (i(6)A), leading to the formation of 2-methylthio-N6-(dimethylallyl)adenosine (ms(2)i(6)A) at position 37 in tRNAs that read codons beginning with uridine. The sequence is that of tRNA-2-methylthio-N(6)-dimethylallyladenosine synthase from Gluconacetobacter diazotrophicus (strain ATCC 49037 / DSM 5601 / CCUG 37298 / CIP 103539 / LMG 7603 / PAl5).